The primary structure comprises 707 residues: Protein kinase C theta type (707 aa).

The region spanning 1 to 107 (MSPFLRIGLS…KNNGRTEIWL (107 aa)) is the C2 domain. Phosphotyrosine; by LCK is present on Tyr-90. Residues 159 to 209 (CHEFTATFFPQPTFCSVCHEFVWGLNKQGYQCRQCNAAIHKKCIDKVIAKC) form a Phorbol-ester/DAG-type 1 zinc finger. Thr-219 carries the phosphothreonine; by autocatalysis modification. The Phorbol-ester/DAG-type 2 zinc finger occupies 231-281 (PHRFKVYNYKSPTFCEHCGTLLWGLARQGLKCDACGMNVHHRCQTKVANLC). A disordered region spans residues 327 to 365 (ETRPPCVPTPGKREPQGISWDSPLDGSNKSAGPPEPEVS). Phosphoserine is present on Ser-348. One can recognise a Protein kinase domain in the interval 380-634 (FILHKMLGKG…RGDIRQHPLF (255 aa)). Residues 386 to 394 (LGKGSFGKV) and Lys-409 contribute to the ATP site. The Proton acceptor role is filled by Asp-504. A Phosphothreonine; by PDPK1 modification is found at Thr-538. The 72-residue stretch at 635–706 (REINWEELER…INPGMETLIC (72 aa)) folds into the AGC-kinase C-terminal domain. A Phosphoserine; by autocatalysis modification is found at Ser-676. Residue Ser-685 is modified to Phosphoserine. Ser-695 is modified (phosphoserine; by autocatalysis).

Belongs to the protein kinase superfamily. AGC Ser/Thr protein kinase family. PKC subfamily. Part of a membrane raft complex composed at least of BCL10, CARD11, MALT1 and IKBKB. Interacts with GLRX3 (via N-terminus). Interacts with ECT2. Interacts with CCDC88A/GIV; the interaction leads to phosphorylation of CCDC88A and inhibition of its guanine nucleotide exchange factor activity. Interacts with CD28. Requires Mg(2+) as cofactor. Post-translationally, autophosphorylation at Thr-219 is required for targeting to the TCR and cellular function of PRKCQ upon antigen receptor ligation. Following TCR stimulation, phosphorylated at Tyr-90 and Ser-685. T-lymphocytes and skeletal muscle.

It is found in the cytoplasm. The protein localises to the cell membrane. It carries out the reaction L-seryl-[protein] + ATP = O-phospho-L-seryl-[protein] + ADP + H(+). The enzyme catalyses L-threonyl-[protein] + ATP = O-phospho-L-threonyl-[protein] + ADP + H(+). Novel PKCs (PRKCD, PRKCE, PRKCH and PRKCQ) are calcium-insensitive, but activated by diacylglycerol (DAG) and phosphatidylserine. Three specific sites; Thr-538 (activation loop of the kinase domain), Ser-676 (turn motif) and Ser-695 (hydrophobic region), need to be phosphorylated for its full activation. Its function is as follows. Calcium-independent, phospholipid- and diacylglycerol (DAG)-dependent serine/threonine-protein kinase that mediates non-redundant functions in T-cell receptor (TCR) signaling, including T-cells activation, proliferation, differentiation and survival, by mediating activation of multiple transcription factors such as NF-kappa-B, JUN, NFATC1 and NFATC2. In TCR-CD3/CD28-co-stimulated T-cells, is required for the activation of NF-kappa-B and JUN, which in turn are essential for IL2 production, and participates in the calcium-dependent NFATC1 and NFATC2 transactivation. Mediates the activation of the canonical NF-kappa-B pathway (NFKB1) by direct phosphorylation of CARD11 on several serine residues, inducing CARD11 association with lipid rafts and recruitment of the BCL10-MALT1 complex, which then activates IKK complex, resulting in nuclear translocation and activation of NFKB1. May also play an indirect role in activation of the non-canonical NF-kappa-B (NFKB2) pathway. In the signaling pathway leading to JUN activation, acts by phosphorylating the mediator STK39/SPAK and may not act through MAP kinases signaling. Plays a critical role in TCR/CD28-induced NFATC1 and NFATC2 transactivation by participating in the regulation of reduced inositol 1,4,5-trisphosphate generation and intracellular calcium mobilization. After costimulation of T-cells through CD28 can phosphorylate CBLB and is required for the ubiquitination and subsequent degradation of CBLB, which is a prerequisite for the activation of TCR. During T-cells differentiation, plays an important role in the development of T-helper 2 (Th2) cells following immune and inflammatory responses, and, in the development of inflammatory autoimmune diseases, is necessary for the activation of IL17-producing Th17 cells. May play a minor role in Th1 response. Upon TCR stimulation, mediates T-cell protective survival signal by phosphorylating BAD, thus protecting T-cells from BAD-induced apoptosis, and by up-regulating BCL-X(L)/BCL2L1 levels through NF-kappa-B and JUN pathways. In platelets, regulates signal transduction downstream of the ITGA2B, CD36/GP4, F2R/PAR1 and F2RL3/PAR4 receptors, playing a positive role in 'outside-in' signaling and granule secretion signal transduction. May relay signals from the activated ITGA2B receptor by regulating the uncoupling of WASP and WIPF1, thereby permitting the regulation of actin filament nucleation and branching activity of the Arp2/3 complex. May mediate inhibitory effects of free fatty acids on insulin signaling by phosphorylating IRS1, which in turn blocks IRS1 tyrosine phosphorylation and downstream activation of the PI3K/AKT pathway. Phosphorylates MSN (moesin) in the presence of phosphatidylglycerol or phosphatidylinositol. Phosphorylates PDPK1 at 'Ser-504' and 'Ser-532' and negatively regulates its ability to phosphorylate PKB/AKT1. Phosphorylates CCDC88A/GIV and inhibits its guanine nucleotide exchange factor activity. Phosphorylates and activates LRRK1, which phosphorylates RAB proteins involved in intracellular trafficking. The protein is Protein kinase C theta type (Prkcq) of Mus musculus (Mouse).